We begin with the raw amino-acid sequence, 66 residues long: Large ribosomal subunit protein bL35 (66 aa).

Composition is skewed to basic residues over residues 1 to 16 (MPKQ…RFKR) and 31 to 45 (HRFH…RQLR). The interval 1-52 (MPKQKTHRASAKRFKRTGNGGLKRSNAYTSHRFHGKTKKQRRQLRKASMVSA) is disordered.

Belongs to the bacterial ribosomal protein bL35 family.

The sequence is that of Large ribosomal subunit protein bL35 from Ligilactobacillus salivarius (strain UCC118) (Lactobacillus salivarius).